Here is a 2311-residue protein sequence, read N- to C-terminus: Protein Ycf2 (2311 aa).

Residue 1652–1659 (GSIGTGRS) participates in ATP binding.

The protein belongs to the Ycf2 family.

It is found in the plastid. It localises to the chloroplast stroma. Its function is as follows. Probable ATPase of unknown function. Its presence in a non-photosynthetic plant (Epifagus virginiana) and experiments in tobacco indicate that it has an essential function which is probably not related to photosynthesis. This Lemna minor (Common duckweed) protein is Protein Ycf2.